The primary structure comprises 114 residues: Nuclear transition protein 2 (114 aa).

The interval 1-114 (MDTKMQSLPT…KRRSSGRRYK (114 aa)) is disordered. Zn(2+)-binding residues include His-12, His-14, His-16, His-24, Cys-29, Cys-31, Cys-35, and Cys-38. The span at 16 to 25 (HSSSRPQSHT) shows a compositional bias: low complexity. Residues 87 to 95 (GKVSKRKAV) carry the Nuclear localization signal motif. The span at 90–114 (SKRKAVRRRKRTHRAKRRSSGRRYK) shows a compositional bias: basic residues. The residue at position 101 (Thr-101) is a Phosphothreonine; by PKA. A Phosphoserine; by PKA modification is found at Ser-109.

The protein belongs to the nuclear transition protein 2 family. As to expression, testis.

The protein resides in the nucleus. Its subcellular location is the nucleolus. The protein localises to the chromosome. In terms of biological role, plays a key role in the replacement of histones to protamine in the elongating spermatids of mammals. In condensing spermatids, loaded onto the nucleosomes, where it promotes the recruitment and processing of protamines, which are responsible for histone eviction. The chain is Nuclear transition protein 2 (Tnp2) from Rattus norvegicus (Rat).